Consider the following 392-residue polypeptide: Magnesium-chelatase 38 kDa subunit (392 aa).

Over residues 1-17 (MTQTANAAKKTTSTKAS) the composition is skewed to low complexity. Residues 1-21 (MTQTANAAKKTTSTKASAAKE) are disordered. 80–87 (GHRGTGKS) is an ATP binding site.

The protein belongs to the Mg-chelatase subunits D/I family.

It catalyses the reaction protoporphyrin IX + Mg(2+) + ATP + H2O = Mg-protoporphyrin IX + ADP + phosphate + 3 H(+). Its pathway is porphyrin-containing compound metabolism; bacteriochlorophyll biosynthesis. In terms of biological role, involved in bacteriochlorophyll biosynthesis; introduces a magnesium ion into protoporphyrin IX to yield Mg-protoporphyrin IX. This is Magnesium-chelatase 38 kDa subunit (bchI) from Chlorobaculum tepidum (strain ATCC 49652 / DSM 12025 / NBRC 103806 / TLS) (Chlorobium tepidum).